The following is a 593-amino-acid chain: Inactive metallocarboxypeptidase ECM14 (593 aa).

The N-terminal stretch at 1 to 22 is a signal peptide; it reads MHVTVQLSLLLSLASSLPLVSA. The propeptide occupies 23 to 175; it reads IPQHDGQAYT…QAIYESYPKN (153 aa). Disordered stretches follow at residues 75–98 and 172–202; these read VPQRGKDSETKTGKQSEAASKAPA and YPKNNPSSPSHPGATTRRFSPSASTPESQPH. Basic and acidic residues predominate over residues 78–88; sequence RGKDSETKTGK. Over residues 188 to 199 the composition is skewed to polar residues; that stretch reads RRFSPSASTPES. In terms of domain architecture, Peptidase M14 spans 211–537; the sequence is DYQPLSVLLP…HAVVAMGKFL (327 aa). 2 residues coordinate Zn(2+): His276 and Glu279. Substrate contacts are provided by residues 276–279, Arg334, and 351–352; these read HARE and DR. Cysteines 345 and 368 form a disulfide. Asn361 is a glycosylation site (N-linked (GlcNAc...) asparagine). Residue His408 participates in Zn(2+) binding. 409–410 serves as a coordination point for substrate; it reads SY. The interval 548 to 593 is disordered; that stretch reads DEPHAGEQTQDNSYDEDGDNLFRAQGGDPQVRFTRRNIGAHDDDSE.

This sequence belongs to the peptidase M14 family. Zn(2+) serves as cofactor.

Its subcellular location is the vacuole. The protein localises to the secreted. Functionally, inactive carboxypeptidase that may play a role in cell wall organization and biogenesis. In Arthroderma otae (strain ATCC MYA-4605 / CBS 113480) (Microsporum canis), this protein is Inactive metallocarboxypeptidase ECM14 (ECM14).